Here is a 504-residue protein sequence, read N- to C-terminus: Sodium-coupled neutral amino acid symporter 2 (504 aa).

Positions 1-28 (MNKAPAQMSRFNIAPDMDSSSTNSNEYT) are disordered. At 1–79 (MNKAPAQMSR…SPGSASFGMS (79 aa)) the chain is on the cytoplasmic side. A regulates protein turnover upon amino acid deprivation region spans residues 1–99 (MNKAPAQMSR…SGILGLSYAM (99 aa)). The span at 19-28 (SSSTNSNEYT) shows a compositional bias: low complexity. The chain crosses the membrane as a helical span at residues 80–99 (VFNLGNAIMGSGILGLSYAM). Asn85 contacts Na(+). Topologically, residues 100–105 (ANTGIA) are extracellular. A helical membrane pass occupies residues 106–126 (MFVILLVAVAIFSLYSVHLLL). Topologically, residues 127–161 (KTANEGGSLVYEQLGYKAFGIPGKLAASCSITMQN) are cytoplasmic. The chain crosses the membrane as a helical span at residues 162–180 (FGAMASYLYIVKYELPIVI). At 181–189 (RAFLDSNDN) the chain is on the extracellular side. A helical transmembrane segment spans residues 190 to 210 (AWYTNGDYLVLIVTMSIILPL). At 211–218 (SLLKNLGY) the chain is on the cytoplasmic side. A helical transmembrane segment spans residues 219–239 (LGYTSGFSLLCMVFFLIVVIY). At 240–285 (KKFQIPCPLPENFINITVNVSQPPQTNNSTDEECCKPKYFIFNSQT) the chain is on the extracellular side. Cys246 and Cys274 form a disulfide bridge. Residues Asn254 and Asn258 are each glycosylated (N-linked (GlcNAc...) asparagine). Residues 286–306 (VYAVPILTFAFVCHPAILPMY) form a helical membrane-spanning segment. Over 307 to 322 (EELKDRSRRKMQNVAN) the chain is Cytoplasmic. The chain crosses the membrane as a helical span at residues 323–343 (VSFLGMFIMYLLAALFGYLTF). The Extracellular portion of the chain corresponds to 344-364 (NEAVEPELLHTYSKVYNFDVV). Residues 365–385 (LLIVRLAVLTAVTLTVPVVLF) form a helical membrane-spanning segment. Thr379 contributes to the Na(+) binding site. Topologically, residues 386–406 (PIRTSVNHLLGASKEFSWPRH) are cytoplasmic. A helical transmembrane segment spans residues 407 to 427 (ICITVALLVCVNILVIFVPTI). Residues 428-429 (RD) lie on the Extracellular side of the membrane. Residues 430–450 (IFGFIGASAAAMLIFILPSAF) form a helical membrane-spanning segment. Residues 451 to 465 (YIKLVKKESMKSVQK) are Cytoplasmic-facing. The chain crosses the membrane as a helical span at residues 466 to 488 (IGATLFLIMGFLVMTGSMALIIM). Residues 489 to 504 (DWIHNALSSEEHTGGH) are Extracellular-facing.

The protein belongs to the amino acid/polyamine transporter 2 family.

Its subcellular location is the cell membrane. It catalyses the reaction L-alanine(in) + Na(+)(in) = L-alanine(out) + Na(+)(out). The catalysed reaction is glycine(in) + Na(+)(in) = glycine(out) + Na(+)(out). It carries out the reaction L-serine(in) + Na(+)(in) = L-serine(out) + Na(+)(out). The enzyme catalyses L-proline(in) + Na(+)(in) = L-proline(out) + Na(+)(out). It catalyses the reaction L-methionine(in) + Na(+)(in) = L-methionine(out) + Na(+)(out). The catalysed reaction is L-histidine(in) + Na(+)(in) = L-histidine(out) + Na(+)(out). It carries out the reaction L-asparagine(in) + Na(+)(in) = L-asparagine(out) + Na(+)(out). The enzyme catalyses L-glutamine(in) + Na(+)(in) = L-glutamine(out) + Na(+)(out). It catalyses the reaction L-threonine(in) + Na(+)(in) = L-threonine(out) + Na(+)(out). The catalysed reaction is L-leucine(in) + Na(+)(in) = L-leucine(out) + Na(+)(out). It carries out the reaction L-phenylalanine(in) + Na(+)(in) = L-phenylalanine(out) + Na(+)(out). Inhibited by N-methyl-D-glucamine. Inhibited by choline. Allosteric regulation of sodium ions binding by pH. In terms of biological role, symporter that cotransports neutral amino acids and sodium ions from the extracellular to the intracellular side of the cell membrane. The transport is pH-sensitive, Li(+)-intolerant, electrogenic, driven by the Na(+) electrochemical gradient and cotransports of neutral amino acids and sodium ions with a stoichiometry of 1:1. This Danio rerio (Zebrafish) protein is Sodium-coupled neutral amino acid symporter 2.